Consider the following 625-residue polypeptide: MSQSLKFAPPFQSFVDASFFQVFSRLKLDVLRLDSHELPLHAKVDLAGLARGSSISHVFLDSQSFDEATASLPGISLRGSFFNFNTLEEFKRLDKGRFLSEQAQLLWEAGVNGYLDEAAGFFVICFADLKKYRFYYWFATPCFQPETLELKVVKREALTEIDKFSNFIEQNKILCGVLNEETGEVIRASRHELERYSTLVVRDTSNIEHCPTSLVKNFVAVWRHHNPNRSECRVLLLRETCSFSLELSVTGDAMSTSQLKASGWERNVRGLLTPKISELGAIIDPTKLAEQSIDLNLKLMKWRLVPDINLDIVKNCKVLLLGAGTLGCYVARSLLAWGVRKITFVDNGSVSYSNPVRQPLFNFTDCGQPKATSAAAAMKAIFPLVDATGFQLEVPMIGHPLTDEARQKKDYEELRQLIRDHDIVFLLMDSRETRWLPTILGNLESKLVINAALGFDSYLVMRHGNYEQPESSRLGCYFCHDVVAPSDSLTDRTLDEMCTVTRPGVALIAAAYATELAVSVLQHPQGNNAPETSESVLGSVPHQLRGFLPQLSTVKLRTPAYKHCSACSSVIVDAVRENGWEFLREALVDHRIVERLSGLAQVQQETETFLATMEISDDDCFDEIS.

Residues Gly322 to Gly327 carry the GXGXXG motif motif. Cys498 (glycyl thioester intermediate) is an active-site residue.

The protein belongs to the ATG7 family. In terms of assembly, homodimer.

Its subcellular location is the cytoplasm. It is found in the preautophagosomal structure. E1-like activating enzyme involved in the 2 ubiquitin-like systems required for cytoplasm to vacuole transport (Cvt) and autophagy. Activates ATG12 for its conjugation with ATG5 and ATG8 for its conjugation with phosphatidylethanolamine. Both systems are needed for the ATG8 association to Cvt vesicles and autophagosomes membranes. Autophagy is essential for maintenance of amino acid levels and protein synthesis under nitrogen starvation. Required for selective autophagic degradation of the nucleus (nucleophagy) as well as for mitophagy which contributes to regulate mitochondrial quantity and quality by eliminating the mitochondria to a basal level to fulfill cellular energy requirements and preventing excess ROS production. Plays a role in the regulation of filamentous growth and chronological longevity. This Eremothecium gossypii (strain ATCC 10895 / CBS 109.51 / FGSC 9923 / NRRL Y-1056) (Yeast) protein is Ubiquitin-like modifier-activating enzyme ATG7 (ATG7).